The chain runs to 241 residues: Attacin-C (241 aa).

Positions 1-21 (MSKIVLLIVVIVGVLGSLAVA) are cleaved as a signal peptide. Positions 22–23 (LP) are excised as a propeptide. A Pyrrolidone carboxylic acid modification is found at glutamine 24. A glycan (O-linked (GalNAc...) threonine) is linked at threonine 39. A Phosphoserine modification is found at serine 127.

The protein belongs to the attacin/sarcotoxin-2 family. As to expression, hemolymph (at protein level).

It is found in the secreted. Its function is as follows. Has antimicrobial activity in synergy with other peptides. Strongest activity observed against E.cloacae. In Drosophila melanogaster (Fruit fly), this protein is Attacin-C.